The primary structure comprises 361 residues: Phosphoserine aminotransferase (361 aa).

Residues Ser9 and Arg42 each coordinate L-glutamate. Pyridoxal 5'-phosphate is bound by residues 76 to 77 (GR), Trp102, Thr153, Asp173, and Gln196. Position 197 is an N6-(pyridoxal phosphate)lysine (Lys197). A pyridoxal 5'-phosphate-binding site is contributed by 238–239 (NT).

The protein belongs to the class-V pyridoxal-phosphate-dependent aminotransferase family. SerC subfamily. As to quaternary structure, homodimer. It depends on pyridoxal 5'-phosphate as a cofactor.

Its subcellular location is the cytoplasm. The enzyme catalyses O-phospho-L-serine + 2-oxoglutarate = 3-phosphooxypyruvate + L-glutamate. The catalysed reaction is 4-(phosphooxy)-L-threonine + 2-oxoglutarate = (R)-3-hydroxy-2-oxo-4-phosphooxybutanoate + L-glutamate. The protein operates within amino-acid biosynthesis; L-serine biosynthesis; L-serine from 3-phospho-D-glycerate: step 2/3. Its pathway is cofactor biosynthesis; pyridoxine 5'-phosphate biosynthesis; pyridoxine 5'-phosphate from D-erythrose 4-phosphate: step 3/5. Functionally, catalyzes the reversible conversion of 3-phosphohydroxypyruvate to phosphoserine and of 3-hydroxy-2-oxo-4-phosphonooxybutanoate to phosphohydroxythreonine. In Cronobacter sakazakii (strain ATCC BAA-894) (Enterobacter sakazakii), this protein is Phosphoserine aminotransferase.